Reading from the N-terminus, the 227-residue chain is Prolactin (227 aa).

The signal sequence occupies residues 1–28 (MNIKGSPWKGSLLLLLVSNLLLCQSVAP). The cysteines at positions 32 and 39 are disulfide-linked. The residue at position 54 (Ser54) is a Phosphoserine. N-linked (GlcNAc...) asparagine; partial glycosylation occurs at Asn59. 4 positions are modified to phosphoserine: Ser62, Ser118, Ser163, and Ser194. 2 cysteine pairs are disulfide-bonded: Cys86/Cys202 and Cys219/Cys227.

The protein belongs to the somatotropin/prolactin family. In terms of assembly, interacts with PRLR.

It is found in the secreted. In terms of biological role, prolactin acts primarily on the mammary gland by promoting lactation. The protein is Prolactin (PRL) of Homo sapiens (Human).